Here is a 522-residue protein sequence, read N- to C-terminus: Maturase K (522 aa).

It belongs to the intron maturase 2 family. MatK subfamily.

The protein localises to the plastid. It is found in the chloroplast. In terms of biological role, usually encoded in the trnK tRNA gene intron. Probably assists in splicing its own and other chloroplast group II introns. The polypeptide is Maturase K (Aristea glauca).